The sequence spans 612 residues: UvrABC system protein C (612 aa).

A GIY-YIG domain is found at 20–98; it reads THSGVYRMLD…IKQHRPKYNI (79 aa). The UVR domain occupies 208–243; that stretch reads SSVLEEISAKMYQASEDMEYEKAQVYRDQLVILRKL.

It belongs to the UvrC family. In terms of assembly, interacts with UvrB in an incision complex.

Its subcellular location is the cytoplasm. Its function is as follows. The UvrABC repair system catalyzes the recognition and processing of DNA lesions. UvrC both incises the 5' and 3' sides of the lesion. The N-terminal half is responsible for the 3' incision and the C-terminal half is responsible for the 5' incision. The protein is UvrABC system protein C of Francisella philomiragia subsp. philomiragia (strain ATCC 25017 / CCUG 19701 / FSC 153 / O#319-036).